We begin with the raw amino-acid sequence, 540 residues long: Protein PALS2 (540 aa).

2 consecutive L27 domains span residues 1–48 and 49–107; these read MQQV…EDSK and LEAV…YDSP. The region spanning 130–209 is the PDZ domain; that stretch reads ILGIHKRAGE…SVTLKILPSY (80 aa). Residues 215–284 form the SH3 domain; it reads PQQVFVKCHF…PSQFLEEKRK (70 aa). In terms of domain architecture, Guanylate kinase-like spans 338–525; the sequence is RKTLVLIGAQ…AFEKLQTAIE (188 aa). Tyr500 is modified (phosphotyrosine).

The protein belongs to the MAGUK family. Interacts with CADM1. Interacts with the LIN7 proteins. In terms of tissue distribution, abundant in testis, brain, and kidney with lower levels detectable in other tissues.

The protein resides in the membrane. The protein is Protein PALS2 of Homo sapiens (Human).